Here is a 342-residue protein sequence, read N- to C-terminus: tRNA-specific 2-thiouridylase MnmA (342 aa).

ATP-binding positions include 6-13 and leucine 32; that span reads LLSGGVDS. Cysteine 92 functions as the Nucleophile in the catalytic mechanism. The cysteines at positions 92 and 191 are disulfide-linked. Residue glycine 116 coordinates ATP. The segment at 138–140 is interaction with tRNA; sequence KDQ. Cysteine 191 serves as the catalytic Cysteine persulfide intermediate. The segment at 293–294 is interaction with tRNA; the sequence is RY.

The protein belongs to the MnmA/TRMU family.

The protein resides in the cytoplasm. It catalyses the reaction S-sulfanyl-L-cysteinyl-[protein] + uridine(34) in tRNA + AH2 + ATP = 2-thiouridine(34) in tRNA + L-cysteinyl-[protein] + A + AMP + diphosphate + H(+). Its function is as follows. Catalyzes the 2-thiolation of uridine at the wobble position (U34) of tRNA, leading to the formation of s(2)U34. In Helicobacter pylori (strain HPAG1), this protein is tRNA-specific 2-thiouridylase MnmA.